Reading from the N-terminus, the 326-residue chain is UDP-3-O-acylglucosamine N-acyltransferase (326 aa).

Histidine 225 serves as the catalytic Proton acceptor.

Belongs to the transferase hexapeptide repeat family. LpxD subfamily. As to quaternary structure, homotrimer.

It carries out the reaction a UDP-3-O-[(3R)-3-hydroxyacyl]-alpha-D-glucosamine + a (3R)-hydroxyacyl-[ACP] = a UDP-2-N,3-O-bis[(3R)-3-hydroxyacyl]-alpha-D-glucosamine + holo-[ACP] + H(+). It participates in bacterial outer membrane biogenesis; LPS lipid A biosynthesis. Its function is as follows. Catalyzes the N-acylation of UDP-3-O-acylglucosamine using 3-hydroxyacyl-ACP as the acyl donor. Is involved in the biosynthesis of lipid A, a phosphorylated glycolipid that anchors the lipopolysaccharide to the outer membrane of the cell. The polypeptide is UDP-3-O-acylglucosamine N-acyltransferase (Acidovorax ebreus (strain TPSY) (Diaphorobacter sp. (strain TPSY))).